We begin with the raw amino-acid sequence, 852 residues long: Lon protease homolog 2, peroxisomal (852 aa).

An N-acetylserine modification is found at Ser-2. The Lon N-terminal domain occupies 13–222; the sequence is LPLLLTHESV…MTIPLLVRQI (210 aa). 375–382 is a binding site for ATP; it reads GPPGVGKT. Positions 651–837 constitute a Lon proteolytic domain; the sequence is LSQPGVAIGL…DEVLNAAFDG (187 aa). Residues Ser-743 and Lys-786 contribute to the active site. The Microbody targeting signal motif lies at 850 to 852; sequence SKL.

Belongs to the peptidase S16 family. As to quaternary structure, interacts with PEX5. Interacts with TYSND1. May interact with enzymes involved in beta-oxidation of fatty acids, including ACOX1/AOX.

It is found in the peroxisome matrix. The catalysed reaction is Hydrolysis of proteins in presence of ATP.. Its function is as follows. ATP-dependent serine protease that mediates the selective degradation of misfolded and unassembled polypeptides in the peroxisomal matrix. Necessary for type 2 peroxisome targeting signal (PTS2)-containing protein processing and facilitates peroxisome matrix protein import. May indirectly regulate peroxisomal fatty acid beta-oxidation through degradation of the self-processed forms of TYSND1. In Mus musculus (Mouse), this protein is Lon protease homolog 2, peroxisomal (Lonp2).